The primary structure comprises 318 residues: MQRRSRGINTGLILLLSQIFHVGINNIPPVTLATLALNIWFFLNPQKPLYSSCLSVEKCYQQRDWQRLLLSPLHHADDWHLYFNTASVLWKGINLERRLGSRWFAYVITTFSVLTGVVYLLLQFAVAEFMDEPDFKRSCAVGFSGVLFALKVLNNHYCPGGFVNILGFPVPNRFACWVELVAIHLFSPGTSFAGHQAGILVGLMYTQGPLKKIMEACAGLGGFSSSVGYPGQQYYFNSSGSSGYQDYYPHGRPDHYEEAPRNYDTYTAGLSEEEQLERALQASLWDRGHTRNSPPPYGFHLSPEEEMRRQRLHRFDSQ.

The Cytoplasmic segment spans residues 1–21 (MQRRSRGINTGLILLLSQIFH). The chain crosses the membrane as a helical span at residues 22-42 (VGINNIPPVTLATLALNIWFF). Residues 43-106 (LNPQKPLYSS…RRLGSRWFAY (64 aa)) lie on the Extracellular side of the membrane. Residues 107-127 (VITTFSVLTGVVYLLLQFAVA) traverse the membrane as a helical segment. Residues 128–137 (EFMDEPDFKR) lie on the Cytoplasmic side of the membrane. A helical transmembrane segment spans residues 138–154 (SCAVGFSGVLFALKVLN). Residue serine 144 is the Nucleophile of the active site. Topologically, residues 155–179 (NHYCPGGFVNILGFPVPNRFACWVE) are extracellular. Residues 180–204 (LVAIHLFSPGTSFAGHQAGILVGLM) traverse the membrane as a helical segment. Histidine 195 is an active-site residue. Residues 205–318 (YTQGPLKKIM…RQRLHRFDSQ (114 aa)) are Cytoplasmic-facing. A ubiquitin-binding domain (UBD) region spans residues 271 to 286 (SEEEQLERALQASLWD). Residues 285–318 (WDRGHTRNSPPPYGFHLSPEEEMRRQRLHRFDSQ) are disordered. Residues 302 to 318 (SPEEEMRRQRLHRFDSQ) show a composition bias toward basic and acidic residues. The VCP/p97-interacting motif (VIM) stretch occupies residues 303 to 318 (PEEEMRRQRLHRFDSQ).

Belongs to the peptidase S54 family. Interacts with BIK and STEAP3. Interacts (via C-terminal domain) with VCP. Interacts with ubiquitin and ubiquitinated proteins.

It localises to the endoplasmic reticulum membrane. Its subcellular location is the mitochondrion membrane. The catalysed reaction is Cleaves type-1 transmembrane domains using a catalytic dyad composed of serine and histidine that are contributed by different transmembrane domains.. With respect to regulation, inhibited by aprotinin. In terms of biological role, intramembrane-cleaving serine protease that cleaves single transmembrane or multi-pass membrane proteins in the hydrophobic plane of the membrane, luminal loops and juxtamembrane regions. Involved in regulated intramembrane proteolysis and the subsequent release of functional polypeptides from their membrane anchors. Functional component of endoplasmic reticulum-associated degradation (ERAD) for misfolded membrane proteins. Required for the degradation process of some specific misfolded endoplasmic reticulum (ER) luminal proteins. Participates in the transfer of misfolded proteins from the ER to the cytosol, where they are destroyed by the proteasome in a ubiquitin-dependent manner. Functions in BIK, MPZ, PKD1, PTCRA, RHO, STEAP3 and TRAC processing. Involved in the regulation of exosomal secretion; inhibits the TSAP6-mediated secretion pathway. Involved in the regulation of apoptosis; modulates BIK-mediated apoptotic activity. Also plays a role in the regulation of spermatogenesis; inhibits apoptotic activity in spermatogonia. This is Rhomboid-related protein 4 (RHBDD1) from Pongo abelii (Sumatran orangutan).